The primary structure comprises 224 residues: Ribonuclease T (224 aa).

An Exonuclease domain is found at 32 to 206 (VVVDVETGGF…YDTEKTAELF (175 aa)). Mg(2+) is bound by residues aspartate 35, glutamate 37, histidine 193, and aspartate 198. Catalysis depends on histidine 193, which acts as the Proton donor/acceptor.

The protein belongs to the RNase T family. Homodimer. Mg(2+) is required as a cofactor.

Functionally, trims short 3' overhangs of a variety of RNA species, leaving a one or two nucleotide 3' overhang. Responsible for the end-turnover of tRNA: specifically removes the terminal AMP residue from uncharged tRNA (tRNA-C-C-A). Also appears to be involved in tRNA biosynthesis. This Pseudomonas fluorescens (strain Pf0-1) protein is Ribonuclease T.